Reading from the N-terminus, the 216-residue chain is 3-isopropylmalate dehydratase small subunit (216 aa).

The protein belongs to the LeuD family. LeuD type 1 subfamily. As to quaternary structure, heterodimer of LeuC and LeuD.

The enzyme catalyses (2R,3S)-3-isopropylmalate = (2S)-2-isopropylmalate. It functions in the pathway amino-acid biosynthesis; L-leucine biosynthesis; L-leucine from 3-methyl-2-oxobutanoate: step 2/4. Catalyzes the isomerization between 2-isopropylmalate and 3-isopropylmalate, via the formation of 2-isopropylmaleate. The protein is 3-isopropylmalate dehydratase small subunit of Psychrobacter sp. (strain PRwf-1).